The following is a 164-amino-acid chain: Small ribosomal subunit protein uS9 (164 aa).

The protein belongs to the universal ribosomal protein uS9 family.

This Rickettsia bellii (strain OSU 85-389) protein is Small ribosomal subunit protein uS9.